A 331-amino-acid polypeptide reads, in one-letter code: MQRIRPYWIKFEQTGGAGMADGMSGINIPSILGCSVTIDNLLTRAEEGLDVSDVIEDLRIQAIPRFVCEAREVTGLKPRFLANSVVSLRVKPEHQETVLVVLNGDSSEVSCDRYYMECVTQPAFRGFIFSVLTAVEDRVYTVGVPPRLLIYRMTLFRPDNVLDFTLCVILMYLEGIGPSGASPSLFVQLSVYLRRVECQIGPLEKMRRFLYEGVLWLLNTLMYVVDNNPFTKTRVLPHYMFVKLLNPQPGTAPNIIKAIYSCGVGQRFDLPHGTPPCPDGVVQVPPGLLNGPLRDSEYQKSVYFWWLNRTMVTPKNVQLFETYKNSPRVVK.

It belongs to the herpesviridae cytoplasmic envelopment protein 1 family. Interacts with protein ORF7; this interaction localizes protein ORF53 to the host trans-Golgi network (TGN).

The protein localises to the virion. It is found in the virion tegument. The protein resides in the host cytoplasm. Its subcellular location is the host Golgi apparatus. Plays a critical role in cytoplasmic virus egress. Participates in the final step of tegumentation and envelope acquisition within the host cytoplasm. This is Cytoplasmic envelopment protein 1 (ORF53) from Varicella-zoster virus (strain Dumas) (HHV-3).